The following is a 175-amino-acid chain: Protein-export protein SecB (175 aa).

Belongs to the SecB family. As to quaternary structure, homotetramer, a dimer of dimers. One homotetramer interacts with 1 SecA dimer.

The protein localises to the cytoplasm. Its function is as follows. One of the proteins required for the normal export of preproteins out of the cell cytoplasm. It is a molecular chaperone that binds to a subset of precursor proteins, maintaining them in a translocation-competent state. It also specifically binds to its receptor SecA. This chain is Protein-export protein SecB, found in Anaplasma marginale (strain Florida).